We begin with the raw amino-acid sequence, 479 residues long: Zinc finger and SCAN domain-containing protein 26 (479 aa).

Residue K17 forms a Glycyl lysine isopeptide (Lys-Gly) (interchain with G-Cter in SUMO2) linkage. In terms of domain architecture, SCAN box spans C51 to L133. Positions T155–N187 are disordered. Over residues Q174–N187 the composition is skewed to basic and acidic residues. A C2H2-type 1; degenerate zinc finger spans residues C232–H254. 7 C2H2-type zinc fingers span residues H283 to H305, Y311 to H333, Y339 to H361, C367 to H389, H395 to H417, F423 to H445, and Y451 to H473.

The protein localises to the nucleus. In terms of biological role, may be involved in transcriptional regulation. The sequence is that of Zinc finger and SCAN domain-containing protein 26 (ZSCAN26) from Bos taurus (Bovine).